The primary structure comprises 61 residues: MAKKALIEKSKRTPKYKTREYSRCKVCGRPRAVYREFGLCRICFREQALEGKLPGVKKASW.

Zn(2+) is bound by residues Cys24, Cys27, Cys40, and Cys43.

It belongs to the universal ribosomal protein uS14 family. Zinc-binding uS14 subfamily. In terms of assembly, part of the 30S ribosomal subunit. Contacts proteins S3 and S10. Zn(2+) serves as cofactor.

Its function is as follows. Binds 16S rRNA, required for the assembly of 30S particles and may also be responsible for determining the conformation of the 16S rRNA at the A site. In Petrotoga mobilis (strain DSM 10674 / SJ95), this protein is Small ribosomal subunit protein uS14.